Consider the following 467-residue polypeptide: Light-independent protochlorophyllide reductase subunit N (467 aa).

[4Fe-4S] cluster-binding residues include Cys24, Cys49, and Cys109.

The protein belongs to the BchN/ChlN family. Protochlorophyllide reductase is composed of three subunits; ChlL, ChlN and ChlB. Forms a heterotetramer of two ChlB and two ChlN subunits. Requires [4Fe-4S] cluster as cofactor.

It carries out the reaction chlorophyllide a + oxidized 2[4Fe-4S]-[ferredoxin] + 2 ADP + 2 phosphate = protochlorophyllide a + reduced 2[4Fe-4S]-[ferredoxin] + 2 ATP + 2 H2O. It participates in porphyrin-containing compound metabolism; chlorophyll biosynthesis (light-independent). Functionally, component of the dark-operative protochlorophyllide reductase (DPOR) that uses Mg-ATP and reduced ferredoxin to reduce ring D of protochlorophyllide (Pchlide) to form chlorophyllide a (Chlide). This reaction is light-independent. The NB-protein (ChlN-ChlB) is the catalytic component of the complex. This chain is Light-independent protochlorophyllide reductase subunit N, found in Leptolyngbya boryana (Plectonema boryanum).